Here is a 640-residue protein sequence, read N- to C-terminus: Chaperone protein DnaK (640 aa).

At Thr-198 the chain carries Phosphothreonine; by autocatalysis. The tract at residues 600–640 (KTQGAGAEGGEQPHGEQEAGGAAKGEKVVDADFEEVKDDKK) is disordered. The span at 630–640 (ADFEEVKDDKK) shows a compositional bias: acidic residues.

The protein belongs to the heat shock protein 70 family.

In terms of biological role, acts as a chaperone. The sequence is that of Chaperone protein DnaK from Citrifermentans bemidjiense (strain ATCC BAA-1014 / DSM 16622 / JCM 12645 / Bem) (Geobacter bemidjiensis).